The primary structure comprises 343 residues: Selenide, water dikinase (343 aa).

The active site involves Cys-15. Residues Lys-18 and His-46–Asp-48 each bind ATP. Asp-49 provides a ligand contact to Mg(2+). ATP contacts are provided by residues Asp-66, Asp-89, and Gly-137–Ser-139. Asp-89 is a binding site for Mg(2+). Asp-225 is a Mg(2+) binding site.

It belongs to the selenophosphate synthase 1 family. Class I subfamily. In terms of assembly, homodimer. Requires Mg(2+) as cofactor.

The catalysed reaction is hydrogenselenide + ATP + H2O = selenophosphate + AMP + phosphate + 2 H(+). Its function is as follows. Synthesizes selenophosphate from selenide and ATP. The chain is Selenide, water dikinase from Sulfurimonas denitrificans (strain ATCC 33889 / DSM 1251) (Thiomicrospira denitrificans (strain ATCC 33889 / DSM 1251)).